The sequence spans 206 residues: Small ribosomal subunit protein uS4 (206 aa).

The 63-residue stretch at 96–158 folds into the S4 RNA-binding domain; sequence GRLDNVVYRM…AKQQTRIKAA (63 aa).

It belongs to the universal ribosomal protein uS4 family. Part of the 30S ribosomal subunit. Contacts protein S5. The interaction surface between S4 and S5 is involved in control of translational fidelity.

In terms of biological role, one of the primary rRNA binding proteins, it binds directly to 16S rRNA where it nucleates assembly of the body of the 30S subunit. With S5 and S12 plays an important role in translational accuracy. This is Small ribosomal subunit protein uS4 from Vibrio vulnificus (strain CMCP6).